Here is a 223-residue protein sequence, read N- to C-terminus: Proteinase inhibitor type-2 TR8 (223 aa).

Residues 1-24 (MAIYKVALLLLFGMILLASDFEHA) form the signal peptide. 3 consecutive repeat copies span residues 24-81 (AKAC…EWVS), 88-145 (KKAC…EWVS), and 152-209 (EKDC…EWVS). 8 cysteine pairs are disulfide-bonded: cysteine 27–cysteine 120, cysteine 31–cysteine 116, cysteine 40–cysteine 126, cysteine 52–cysteine 95, cysteine 55–cysteine 73, cysteine 56–cysteine 91, cysteine 62–cysteine 104, and cysteine 119–cysteine 137.

It belongs to the protease inhibitor I20 (potato type II proteinase inhibitor) family.

This Solanum lycopersicum (Tomato) protein is Proteinase inhibitor type-2 TR8 (ARPI).